The following is a 475-amino-acid chain: Ribulose bisphosphate carboxylase large chain (475 aa).

A propeptide spanning residues 1 to 2 (MS) is cleaved from the precursor. Position 3 is an N-acetylproline (proline 3). At lysine 14 the chain carries N6,N6,N6-trimethyllysine. Substrate is bound by residues asparagine 123 and threonine 173. Residue lysine 175 is the Proton acceptor of the active site. Lysine 177 lines the substrate pocket. Residues lysine 201, aspartate 203, and glutamate 204 each coordinate Mg(2+). Position 201 is an N6-carboxylysine (lysine 201). Histidine 294 functions as the Proton acceptor in the catalytic mechanism. Substrate is bound by residues arginine 295, histidine 327, and serine 379.

The protein belongs to the RuBisCO large chain family. Type I subfamily. In terms of assembly, heterohexadecamer of 8 large chains and 8 small chains; disulfide-linked. The disulfide link is formed within the large subunit homodimers. The cofactor is Mg(2+). In terms of processing, the disulfide bond which can form in the large chain dimeric partners within the hexadecamer appears to be associated with oxidative stress and protein turnover.

The protein resides in the plastid. It localises to the chloroplast. The catalysed reaction is 2 (2R)-3-phosphoglycerate + 2 H(+) = D-ribulose 1,5-bisphosphate + CO2 + H2O. It catalyses the reaction D-ribulose 1,5-bisphosphate + O2 = 2-phosphoglycolate + (2R)-3-phosphoglycerate + 2 H(+). Functionally, ruBisCO catalyzes two reactions: the carboxylation of D-ribulose 1,5-bisphosphate, the primary event in carbon dioxide fixation, as well as the oxidative fragmentation of the pentose substrate in the photorespiration process. Both reactions occur simultaneously and in competition at the same active site. This Piper cenocladum (Ant piper) protein is Ribulose bisphosphate carboxylase large chain.